Here is a 353-residue protein sequence, read N- to C-terminus: Protein RecA (353 aa).

Residue 67–74 coordinates ATP; it reads GPESSGKT.

Belongs to the RecA family.

It localises to the cytoplasm. In terms of biological role, can catalyze the hydrolysis of ATP in the presence of single-stranded DNA, the ATP-dependent uptake of single-stranded DNA by duplex DNA, and the ATP-dependent hybridization of homologous single-stranded DNAs. It interacts with LexA causing its activation and leading to its autocatalytic cleavage. In Salmonella paratyphi A (strain ATCC 9150 / SARB42), this protein is Protein RecA.